Here is a 66-residue protein sequence, read N- to C-terminus: MIVPIRCFTCGKPLGHLYITFKHRVLAGEHPGRVLDELGVHRYCCRRTLIAHVEWIDDLLVYEKRS.

Zn(2+) contacts are provided by C7, C10, C44, and C45.

This sequence belongs to the archaeal Rpo10/eukaryotic RPB10 RNA polymerase subunit family. As to quaternary structure, part of the RNA polymerase complex. Zn(2+) serves as cofactor.

The protein resides in the cytoplasm. The enzyme catalyses RNA(n) + a ribonucleoside 5'-triphosphate = RNA(n+1) + diphosphate. DNA-dependent RNA polymerase (RNAP) catalyzes the transcription of DNA into RNA using the four ribonucleoside triphosphates as substrates. The chain is DNA-directed RNA polymerase subunit Rpo10 from Pyrobaculum islandicum (strain DSM 4184 / JCM 9189 / GEO3).